The chain runs to 209 residues: Geminin (209 aa).

The tract at residues 1–79 (MNPSMKQKQE…PESSENKNLG (79 aa)) is disordered. A compositionally biased stretch (basic and acidic residues) spans 7 to 16 (QKQEEIKENI). Lysine 27 carries the post-translational modification N6-acetyllysine. Serine 34, serine 36, serine 49, serine 63, and serine 64 each carry phosphoserine. The necessary and sufficient for interaction with IDAS and CDT1 stretch occupies residues 82-161 (TQESFDLMIK…AELIERLNGE (80 aa)). A coiled-coil region spans residues 94–144 (PSSQYWKEVAEKRRKALYEALKENEKLHKEIEQKDNEIARLKKENKELAEV). The interval 164 to 209 (DNFESLDNQEFDSEEETVEDSLVEDSEIGTCAEGTVSSSTDAKPCI) is disordered. The segment at 170 to 190 (DNQEFDSEEETVEDSLVEDSE) is homeodomain binding. Residues 170 to 190 (DNQEFDSEEETVEDSLVEDSE) are compositionally biased toward acidic residues. Serine 184 carries the post-translational modification Phosphoserine; by CK2. Polar residues predominate over residues 198-209 (TVSSSTDAKPCI).

Belongs to the geminin family. As to quaternary structure, homotetramer. Interacts with CDT1; this inhibits binding of the MCM complex to origins of replication. The complex with CDT1 exists in two forms, a 'permissive' heterotrimer and an 'inhibitory' heterohexamer. Interacts (via coiled-coil domain) with IDAS (via coiled-coil domain); this targets GMNN to the nucleus. The heterodimer formed by GMNN and MCIDAS has much lower affinity for CDT1 than the GMNN homodimer. Interacts with a subset of Hox proteins, affinity increasing from anterior to posterior types, the strongest interaction being with HOXB1, HOXC9 and HOXD10. Interacts with LRWD1 from G1/S to mitosis. In terms of processing, phosphorylated during mitosis. Phosphorylation at Ser-184 by CK2 results in enhanced binding to Hox proteins and more potent inhibitory effect on Hox transcriptional activity.

It localises to the cytoplasm. The protein resides in the nucleus. Its function is as follows. Inhibits DNA replication by preventing the incorporation of MCM complex into pre-replication complex (pre-RC). It is degraded during the mitotic phase of the cell cycle. Its destruction at the metaphase-anaphase transition permits replication in the succeeding cell cycle. Inhibits histone acetyltransferase activity of KAT7/HBO1 in a CDT1-dependent manner, inhibiting histone H4 acetylation and DNA replication licensing. Inhibits the transcriptional activity of a subset of Hox proteins, enrolling them in cell proliferative control. This Homo sapiens (Human) protein is Geminin (GMNN).